Consider the following 497-residue polypeptide: Cytosol aminopeptidase (497 aa).

Lys-267 and Asp-272 together coordinate Mn(2+). The active site involves Lys-279. 3 residues coordinate Mn(2+): Asp-290, Asp-349, and Glu-351. Residue Arg-353 is part of the active site.

Belongs to the peptidase M17 family. Mn(2+) serves as cofactor.

The protein localises to the cytoplasm. The catalysed reaction is Release of an N-terminal amino acid, Xaa-|-Yaa-, in which Xaa is preferably Leu, but may be other amino acids including Pro although not Arg or Lys, and Yaa may be Pro. Amino acid amides and methyl esters are also readily hydrolyzed, but rates on arylamides are exceedingly low.. The enzyme catalyses Release of an N-terminal amino acid, preferentially leucine, but not glutamic or aspartic acids.. Functionally, presumably involved in the processing and regular turnover of intracellular proteins. Catalyzes the removal of unsubstituted N-terminal amino acids from various peptides. The protein is Cytosol aminopeptidase (pepA) of Pseudomonas putida (Arthrobacter siderocapsulatus).